A 187-amino-acid chain; its full sequence is Meiotically up-regulated protein C1442.13c (187 aa).

2 disordered regions span residues 15–46 (QWEN…LSNE) and 119–145 (IQEG…PAIN). The segment covering 26-41 (PPRKPKIVQPKKKPSK) has biased composition (basic residues). Residues 145–187 (NNGKGKQLLEMMGWSRGKGLGSENQGMVDPVVAVVKNNKQGLH) enclose the G-patch domain.

Its subcellular location is the nucleus. It localises to the cytoplasm. It is found in the cytoskeleton. The protein localises to the microtubule organizing center. The protein resides in the spindle pole body. In terms of biological role, has a role in meiosis and sporulation. Required for meiotic chromosome segregation. This is Meiotically up-regulated protein C1442.13c from Schizosaccharomyces pombe (strain 972 / ATCC 24843) (Fission yeast).